Consider the following 145-residue polypeptide: Large ribosomal subunit protein uL15 (145 aa).

Composition is skewed to basic residues over residues 1–13 and 22–33; these read MIRKTKKIRKQRG and TKKRRGAGHRGG. Residues 1 to 41 form a disordered region; it reads MIRKTKKIRKQRGSRSVGGGCTKKRRGAGHRGGRGQAGGNK.

It belongs to the universal ribosomal protein uL15 family. Part of the 50S ribosomal subunit.

Functionally, binds to the 23S rRNA. This chain is Large ribosomal subunit protein uL15, found in Methanosphaera stadtmanae (strain ATCC 43021 / DSM 3091 / JCM 11832 / MCB-3).